Consider the following 279-residue polypeptide: Tryptophan synthase alpha chain (279 aa).

Active-site proton acceptor residues include glutamate 50 and aspartate 61.

The protein belongs to the TrpA family. As to quaternary structure, tetramer of two alpha and two beta chains.

It catalyses the reaction (1S,2R)-1-C-(indol-3-yl)glycerol 3-phosphate + L-serine = D-glyceraldehyde 3-phosphate + L-tryptophan + H2O. Its pathway is amino-acid biosynthesis; L-tryptophan biosynthesis; L-tryptophan from chorismate: step 5/5. Functionally, the alpha subunit is responsible for the aldol cleavage of indoleglycerol phosphate to indole and glyceraldehyde 3-phosphate. The polypeptide is Tryptophan synthase alpha chain (Rhizobium rhizogenes (strain K84 / ATCC BAA-868) (Agrobacterium radiobacter)).